The chain runs to 432 residues: Adenylosuccinate synthetase (432 aa).

GTP contacts are provided by residues 12-18 (GDEGKGK) and 40-42 (GHT). Asp-13 functions as the Proton acceptor in the catalytic mechanism. Residues Asp-13 and Gly-40 each contribute to the Mg(2+) site. IMP is bound by residues 13–16 (DEGK), 38–41 (NAGH), Thr-128, Arg-142, Gln-223, Thr-238, and Arg-302. His-41 acts as the Proton donor in catalysis. 298–304 (TTTGRPR) contributes to the substrate binding site. GTP-binding positions include Arg-304, 330–332 (HLD), and 417–419 (GVG).

The protein belongs to the adenylosuccinate synthetase family. Homodimer. The cofactor is Mg(2+).

Its subcellular location is the cytoplasm. The enzyme catalyses IMP + L-aspartate + GTP = N(6)-(1,2-dicarboxyethyl)-AMP + GDP + phosphate + 2 H(+). It functions in the pathway purine metabolism; AMP biosynthesis via de novo pathway; AMP from IMP: step 1/2. Functionally, plays an important role in the de novo pathway of purine nucleotide biosynthesis. Catalyzes the first committed step in the biosynthesis of AMP from IMP. The chain is Adenylosuccinate synthetase from Symbiobacterium thermophilum (strain DSM 24528 / JCM 14929 / IAM 14863 / T).